Here is a 250-residue protein sequence, read N- to C-terminus: Probable transcriptional regulatory protein Rxyl_1318 (250 aa).

The protein belongs to the TACO1 family.

Its subcellular location is the cytoplasm. This is Probable transcriptional regulatory protein Rxyl_1318 from Rubrobacter xylanophilus (strain DSM 9941 / JCM 11954 / NBRC 16129 / PRD-1).